Reading from the N-terminus, the 170-residue chain is Fimbrial protein (170 aa).

The propeptide occupies 1 to 7; the sequence is MNTLQKG. F8 is subject to N-methylphenylalanine. Residues 8 to 28 form a helical membrane-spanning segment; sequence FTLIELMIVIAIVGILAAVAL. S70 is a glycosylation site (O-linked (Gal...) serine). S100 carries the O-(sn-1-glycerophosphoryl)serine modification. C127 and C163 form a disulfide bridge.

It belongs to the N-Me-Phe pilin family. As to quaternary structure, the pili are polar flexible filaments of about 5.4 nanometers diameter and 2.5 micrometers average length; they consist of only a single polypeptide chain arranged in a helical configuration of five subunits per turn in the assembled pilus. In terms of processing, O-linked glycan consists of GlcNAc-Gal disaccharide.

The protein localises to the fimbrium. It localises to the membrane. In terms of biological role, major component of the type IV pilus (T4P) that plays a role in cellular adherence, microcolony formation as well as twitching motility. The sequence is that of Fimbrial protein (pilE) from Neisseria meningitidis serogroup A / serotype 4A (strain DSM 15465 / Z2491).